The sequence spans 361 residues: Mitogen-activated protein kinase 14A (361 aa).

Residues 25–309 (YQNLSPVGSG…AAEALAHPYF (285 aa)) form the Protein kinase domain. Residues 31–39 (VGSGAYGSV) and Lys-54 contribute to the ATP site. The active-site Proton acceptor is the Asp-169. A Phosphothreonine; by MAP2K3 modification is found at Thr-181. The TXY motif lies at 181–183 (TGY). Phosphotyrosine; by MAP2K3 is present on Tyr-183.

The protein belongs to the protein kinase superfamily. CMGC Ser/Thr protein kinase family. MAP kinase subfamily. Requires Mg(2+) as cofactor. Dually phosphorylated on Thr-181 and Tyr-183, which activates the enzyme.

It localises to the cytoplasm. It is found in the nucleus. It carries out the reaction L-seryl-[protein] + ATP = O-phospho-L-seryl-[protein] + ADP + H(+). The catalysed reaction is L-threonyl-[protein] + ATP = O-phospho-L-threonyl-[protein] + ADP + H(+). Its activity is regulated as follows. Activated by threonine and tyrosine phosphorylation by the dual specificity kinase, MKK3. In terms of biological role, serine/threonine kinase which acts as an essential component of the MAP kinase signal transduction pathway. Mapk14a is one of the four p38 MAPKs which play an important role in the cascades of cellular responses evoked by extracellular stimuli such as pro-inflammatory cytokines or physical stress leading to direct activation of transcription factors. Accordingly, p38 MAPKs phosphorylate a broad range of proteins and it has been estimated that they may have approximately 200 to 300 substrates each. Some of the targets are downstream kinases which are activated through phosphorylation and further phosphorylate additional targets. Required for cytokinesis on the future dorsal side of the blastodisc, suggesting a role in symmetrical and synchronous blastomere cleavage. In Danio rerio (Zebrafish), this protein is Mitogen-activated protein kinase 14A (mapk14a).